The primary structure comprises 414 residues: NADH-ubiquinone oxidoreductase chain 4 (414 aa).

The next 10 membrane-spanning stretches (helical) occupy residues 18-38, 47-67, 96-116, 126-146, 160-180, 188-208, 216-236, 254-274, 293-313, and 375-395; these read LVQL…MIGV, IAAF…LMSI, IIFI…PLHL, PTAG…YGYI, YFPI…IATL, IVAY…FSGV, IILM…IGVI, MMPI…AFPI, IIIA…SFWL, and VNIF…IVGM.

Belongs to the complex I subunit 4 family.

The protein resides in the mitochondrion membrane. It carries out the reaction a ubiquinone + NADH + 5 H(+)(in) = a ubiquinol + NAD(+) + 4 H(+)(out). Its function is as follows. Core subunit of the mitochondrial membrane respiratory chain NADH dehydrogenase (Complex I) that is believed to belong to the minimal assembly required for catalysis. Complex I functions in the transfer of electrons from NADH to the respiratory chain. The immediate electron acceptor for the enzyme is believed to be ubiquinone. The polypeptide is NADH-ubiquinone oxidoreductase chain 4 (nad4) (Dictyostelium citrinum (Slime mold)).